The primary structure comprises 573 residues: Proline--tRNA ligase (573 aa).

Belongs to the class-II aminoacyl-tRNA synthetase family. ProS type 1 subfamily. As to quaternary structure, homodimer.

The protein resides in the cytoplasm. The catalysed reaction is tRNA(Pro) + L-proline + ATP = L-prolyl-tRNA(Pro) + AMP + diphosphate. In terms of biological role, catalyzes the attachment of proline to tRNA(Pro) in a two-step reaction: proline is first activated by ATP to form Pro-AMP and then transferred to the acceptor end of tRNA(Pro). As ProRS can inadvertently accommodate and process non-cognate amino acids such as alanine and cysteine, to avoid such errors it has two additional distinct editing activities against alanine. One activity is designated as 'pretransfer' editing and involves the tRNA(Pro)-independent hydrolysis of activated Ala-AMP. The other activity is designated 'posttransfer' editing and involves deacylation of mischarged Ala-tRNA(Pro). The misacylated Cys-tRNA(Pro) is not edited by ProRS. In Chromohalobacter salexigens (strain ATCC BAA-138 / DSM 3043 / CIP 106854 / NCIMB 13768 / 1H11), this protein is Proline--tRNA ligase.